A 318-amino-acid polypeptide reads, in one-letter code: NADH-ubiquinone oxidoreductase chain 1 (318 aa).

8 consecutive transmembrane segments (helical) span residues 2–22 (FMLN…FLTL), 68–88 (ITMF…MWIP), 100–120 (LGVL…LWSG), 147–167 (AIIL…TLII), 171–191 (YIWL…STLA), 217–237 (GGPF…MNAL), 254–273 (LYTT…FLWI), and 294–314 (LPLT…MAGI).

Belongs to the complex I subunit 1 family.

It localises to the mitochondrion inner membrane. It catalyses the reaction a ubiquinone + NADH + 5 H(+)(in) = a ubiquinol + NAD(+) + 4 H(+)(out). In terms of biological role, core subunit of the mitochondrial membrane respiratory chain NADH dehydrogenase (Complex I) that is believed to belong to the minimal assembly required for catalysis. Complex I functions in the transfer of electrons from NADH to the respiratory chain. The immediate electron acceptor for the enzyme is believed to be ubiquinone. This is NADH-ubiquinone oxidoreductase chain 1 (MT-ND1) from Hsunycteris thomasi (Thomas's nectar bat).